The following is a 113-amino-acid chain: Nucleoid-associated protein EUBREC_0329 (113 aa).

Residues 1–12 (MARRGGFPGGMP) show a composition bias toward gly residues. The interval 1–45 (MARRGGFPGGMPGNMNNLMKQAQKMQRQMEEAQKQLEDAEVTAKA) is disordered. Basic and acidic residues predominate over residues 27 to 37 (RQMEEAQKQLE).

This sequence belongs to the YbaB/EbfC family. Homodimer.

It is found in the cytoplasm. The protein localises to the nucleoid. Functionally, binds to DNA and alters its conformation. May be involved in regulation of gene expression, nucleoid organization and DNA protection. This is Nucleoid-associated protein EUBREC_0329 from Agathobacter rectalis (strain ATCC 33656 / DSM 3377 / JCM 17463 / KCTC 5835 / VPI 0990) (Eubacterium rectale).